The primary structure comprises 326 residues: D-alanine--D-alanine ligase (326 aa).

An ATP-grasp domain is found at 112–312 (KRIWRFEGLP…YENLCLGILA (201 aa)). Residue 138–193 (LQALGAPMIVKPSREGSTIGLTKVWTAEECDQAYVLASRYDPEVLCEEFIEGDETT) coordinates ATP. 3 residues coordinate Mg(2+): D265, E279, and N281.

It belongs to the D-alanine--D-alanine ligase family. It depends on Mg(2+) as a cofactor. Mn(2+) serves as cofactor.

It is found in the cytoplasm. The enzyme catalyses 2 D-alanine + ATP = D-alanyl-D-alanine + ADP + phosphate + H(+). The protein operates within cell wall biogenesis; peptidoglycan biosynthesis. Its function is as follows. Cell wall formation. The protein is D-alanine--D-alanine ligase of Delftia acidovorans (strain DSM 14801 / SPH-1).